A 152-amino-acid chain; its full sequence is Xanthine-guanine phosphoribosyltransferase (152 aa).

Residues 37-38 (RG), R69, and 88-96 (DDLVDTGGT) contribute to the 5-phospho-alpha-D-ribose 1-diphosphate site. R69 contributes to the GMP binding site. D89 contributes to the Mg(2+) binding site. Guanine is bound by residues D92 and I135. Residues D92 and I135 each contribute to the xanthine site. GMP-binding positions include 92 to 96 (DTGGT) and 134 to 135 (WI).

This sequence belongs to the purine/pyrimidine phosphoribosyltransferase family. XGPT subfamily. In terms of assembly, homotetramer. Requires Mg(2+) as cofactor.

The protein localises to the cell inner membrane. It catalyses the reaction GMP + diphosphate = guanine + 5-phospho-alpha-D-ribose 1-diphosphate. The catalysed reaction is XMP + diphosphate = xanthine + 5-phospho-alpha-D-ribose 1-diphosphate. It carries out the reaction IMP + diphosphate = hypoxanthine + 5-phospho-alpha-D-ribose 1-diphosphate. The protein operates within purine metabolism; GMP biosynthesis via salvage pathway; GMP from guanine: step 1/1. It participates in purine metabolism; XMP biosynthesis via salvage pathway; XMP from xanthine: step 1/1. Functionally, purine salvage pathway enzyme that catalyzes the transfer of the ribosyl-5-phosphate group from 5-phospho-alpha-D-ribose 1-diphosphate (PRPP) to the N9 position of the 6-oxopurines guanine and xanthine to form the corresponding ribonucleotides GMP (guanosine 5'-monophosphate) and XMP (xanthosine 5'-monophosphate), with the release of PPi. To a lesser extent, also acts on hypoxanthine. The polypeptide is Xanthine-guanine phosphoribosyltransferase (Citrobacter koseri (strain ATCC BAA-895 / CDC 4225-83 / SGSC4696)).